The chain runs to 433 residues: Enolase (433 aa).

Q167 is a (2R)-2-phosphoglycerate binding site. The active-site Proton donor is the E209. Mg(2+)-binding residues include D246, E291, and D318. (2R)-2-phosphoglycerate is bound by residues K343, R372, S373, and K394. K343 acts as the Proton acceptor in catalysis.

It belongs to the enolase family. Component of the RNA degradosome, a multiprotein complex involved in RNA processing and mRNA degradation. Requires Mg(2+) as cofactor.

Its subcellular location is the cytoplasm. The protein localises to the secreted. It is found in the cell surface. It catalyses the reaction (2R)-2-phosphoglycerate = phosphoenolpyruvate + H2O. The protein operates within carbohydrate degradation; glycolysis; pyruvate from D-glyceraldehyde 3-phosphate: step 4/5. Catalyzes the reversible conversion of 2-phosphoglycerate (2-PG) into phosphoenolpyruvate (PEP). It is essential for the degradation of carbohydrates via glycolysis. This is Enolase from Histophilus somni (strain 129Pt) (Haemophilus somnus).